Consider the following 519-residue polypeptide: Tachykinin-like peptides receptor 99D (519 aa).

Over 1-100 (MENRSDFEAD…SFAFVVPWWR (100 aa)) the chain is Extracellular. N-linked (GlcNAc...) asparagine glycans are attached at residues Asn-3, Asn-19, Asn-22, and Asn-61. The helical transmembrane segment at 101 to 123 (QVLWSILFGGMVIVATGGNLIVV) threads the bilayer. Residues 124–134 (WIVMTTKRMRT) lie on the Cytoplasmic side of the membrane. Residues 135–155 (VTNYFIVNLSIADAMVSSLNV) traverse the membrane as a helical segment. Residues 156 to 175 (TFNYYYMLDSDWPFGEFYCK) are Extracellular-facing. Residues Cys-174 and Cys-254 are joined by a disulfide bond. A helical transmembrane segment spans residues 176–197 (LSQFIAMLSICASVFTLMAISI). Residues 198-217 (DRYVAIIRPLQPRMSKRCNL) are Cytoplasmic-facing. A helical transmembrane segment spans residues 218 to 238 (AIAAVIWLASTLISCPMMIIY). The Extracellular segment spans residues 239–270 (RTEEVPVRGLSNRTVCYPEWPDGPTNHSTMES). The helical transmembrane segment at 271–292 (LYNILIIILTYFLPIVSMTVTY) threads the bilayer. The Cytoplasmic segment spans residues 293–324 (SRVGIELWGSKTIGECTPRQVENVRSKRRVVK). Residues 325–346 (MMIVVVLIFAICWLPFHSYFII) traverse the membrane as a helical segment. Over 347-361 (TSCYPAITEAPFIQE) the chain is Extracellular. Residues 362-384 (LYLAIYWLAMSNSMYNPIIYCWM) traverse the membrane as a helical segment. Residues 385-519 (NSRFRYGFKM…STANTTQLLS (135 aa)) are Cytoplasmic-facing. Cys-399 carries the S-palmitoyl cysteine lipid modification. Positions 444 to 519 (PSSPKSHRIS…STANTTQLLS (76 aa)) are disordered. Composition is skewed to polar residues over residues 454–465 (HSGTGRSATLRN) and 487–499 (SYQQ…WSGP). The segment covering 500–519 (NSATAVTNSSSTANTTQLLS) has biased composition (low complexity).

Belongs to the G-protein coupled receptor 1 family. In terms of tissue distribution, during late embryogenesis (stages 11-15), expressed in the brain and in a specific subset of neurons in each neuromere of the developing ventral ganglion. Expressed in the cortex of the adult brain, which contains the neuronal cell bodies.

Its subcellular location is the cell membrane. Receptor for tachykinin-like peptides. The protein is Tachykinin-like peptides receptor 99D (TkR99D) of Drosophila melanogaster (Fruit fly).